A 78-amino-acid chain; its full sequence is Small ribosomal subunit protein bS18 (78 aa).

Belongs to the bacterial ribosomal protein bS18 family. Part of the 30S ribosomal subunit. Forms a tight heterodimer with protein bS6.

Its function is as follows. Binds as a heterodimer with protein bS6 to the central domain of the 16S rRNA, where it helps stabilize the platform of the 30S subunit. The sequence is that of Small ribosomal subunit protein bS18 from Rhodospirillum rubrum (strain ATCC 11170 / ATH 1.1.1 / DSM 467 / LMG 4362 / NCIMB 8255 / S1).